The following is a 582-amino-acid chain: 2-succinyl-5-enolpyruvyl-6-hydroxy-3-cyclohexene-1-carboxylate synthase (582 aa).

The protein belongs to the TPP enzyme family. MenD subfamily. Homodimer. Mg(2+) serves as cofactor. It depends on Mn(2+) as a cofactor. Requires thiamine diphosphate as cofactor.

The catalysed reaction is isochorismate + 2-oxoglutarate + H(+) = 5-enolpyruvoyl-6-hydroxy-2-succinyl-cyclohex-3-ene-1-carboxylate + CO2. It functions in the pathway quinol/quinone metabolism; 1,4-dihydroxy-2-naphthoate biosynthesis; 1,4-dihydroxy-2-naphthoate from chorismate: step 2/7. Its pathway is quinol/quinone metabolism; menaquinone biosynthesis. Functionally, catalyzes the thiamine diphosphate-dependent decarboxylation of 2-oxoglutarate and the subsequent addition of the resulting succinic semialdehyde-thiamine pyrophosphate anion to isochorismate to yield 2-succinyl-5-enolpyruvyl-6-hydroxy-3-cyclohexene-1-carboxylate (SEPHCHC). The protein is 2-succinyl-5-enolpyruvyl-6-hydroxy-3-cyclohexene-1-carboxylate synthase of Chlorobaculum tepidum (strain ATCC 49652 / DSM 12025 / NBRC 103806 / TLS) (Chlorobium tepidum).